A 471-amino-acid chain; its full sequence is Desmin (471 aa).

Residues 2–109 (SQAYSSSQRV…QEFLTTRTNE (108 aa)) form a head region. Ser-7 is subject to Phosphoserine; by CDK1. At Ser-12 the chain carries Phosphoserine; by AURKB. Arg-16 is subject to Omega-N-methylarginine. A Phosphothreonine; by AURKB and ROCK1 modification is found at Thr-17. Ser-28 carries the phosphoserine; by CDK1 modification. A Phosphoserine modification is found at Ser-31. Ser-32 carries the post-translational modification Phosphoserine; by CDK1. Arg-37 is modified (asymmetric dimethylarginine; alternate). An Omega-N-methylarginine; alternate modification is found at Arg-37. At Ser-45 the chain carries Phosphoserine. An ADP-ribosylarginine modification is found at Arg-58. Residue Ser-60 is modified to Phosphoserine; by AURKB. At Arg-70 the chain carries Omega-N-methylarginine. Thr-77 is subject to Phosphothreonine; by ROCK1. Ser-81 is subject to Phosphoserine. Positions 109 to 417 (EKVELQELND…KLLEGEESRI (309 aa)) constitute an IF rod domain. Residues 110–142 (KVELQELNDRFANYIEKVRFLEQQNAALAAEVN) are coil 1A. Positions 143-152 (RLKGREPTRV) are linker 1. Residues 153–253 (AEIYEEELRE…HEEEIRELQA (101 aa)) form a coil 1B region. Positions 254–269 (QLQEQQVQVEMDMSKP) are linker 12. An interaction with NEB region spans residues 269-416 (PDLTAALRDI…RKLLEGEESR (148 aa)). The segment at 270 to 288 (DLTAALRDIRAQYETIAAK) is coil 2A. The segment at 289–296 (NISEAEEW) is linker 2. Ser-291, Ser-359, Ser-362, and Ser-425 each carry phosphoserine. A coil 2B region spans residues 297–413 (YKSKVSDLTQ…ATYRKLLEGE (117 aa)). Residues 414 to 471 (ESRINLPIQTFSALNFRETSPEQRGSEVHTKKTVMIKTIETRDGEVVSEATQQQHEVL) form a tail region. The interaction with CRYAB stretch occupies residues 439–454 (SEVHTKKTVMIKTIET).

This sequence belongs to the intermediate filament family. Homomer. Interacts with DST. Interacts with MTM1. Interacts with EPPK1; interaction is dependent of higher-order structure of intermediate filament. Interacts with CRYAB. Interacts with NEB (via nebulin repeats 160-164). Interacts (via rod region) with NEBL (via nebulin repeats 1-5). Interacts with ASB2; the interaction targets DES for proteasomal degradation. Interacts with PKP1. Interacts with FLII. ADP-ribosylation prevents ability to form intermediate filaments. In terms of processing, phosphorylation at Ser-7, Ser-28 and Ser-32 by CDK1 and phosphorylation at Ser-60 by AURKB contribute to efficient separation of desmin intermediate filaments during mitosis. Post-translationally, ubiquitination by a SCF-like complex containing ASB2 leads to proteasomal degradation.

It is found in the cytoplasm. The protein resides in the myofibril. It localises to the sarcomere. The protein localises to the z line. Its subcellular location is the cell membrane. It is found in the sarcolemma. The protein resides in the nucleus. It localises to the cell tip. The protein localises to the nucleus envelope. Functionally, muscle-specific type III intermediate filament essential for proper muscular structure and function. Plays a crucial role in maintaining the structure of sarcomeres, inter-connecting the Z-disks and forming the myofibrils, linking them not only to the sarcolemmal cytoskeleton, but also to the nucleus and mitochondria, thus providing strength for the muscle fiber during activity. In adult striated muscle they form a fibrous network connecting myofibrils to each other and to the plasma membrane from the periphery of the Z-line structures. May act as a sarcomeric microtubule-anchoring protein: specifically associates with detyrosinated tubulin-alpha chains, leading to buckled microtubules and mechanical resistance to contraction. Required for nuclear membrane integrity, via anchoring at the cell tip and nuclear envelope, resulting in maintenance of microtubule-derived intracellular mechanical forces. Contributes to the transcriptional regulation of the NKX2-5 gene in cardiac progenitor cells during a short period of cardiomyogenesis and in cardiac side population stem cells in the adult. Plays a role in maintaining an optimal conformation of nebulette (NEB) on heart muscle sarcomeres to bind and recruit cardiac alpha-actin. The chain is Desmin (DES) from Sus scrofa (Pig).